The following is a 130-amino-acid chain: Probable 4-amino-4-deoxy-L-arabinose-phosphoundecaprenol flippase subunit ArnF (130 aa).

Over 1–4 (MGYG) the chain is Cytoplasmic. A helical transmembrane segment spans residues 5–25 (WALFSVALVSAAQLLLKWVMM). The Periplasmic segment spans residues 26–44 (HLPPLGALRLWLDPAYAEP). A helical transmembrane segment spans residues 45-65 (LALLMGGLLAYVCSMGCWFMA). Residues 66-74 (LRRLPLNKA) are Cytoplasmic-facing. The chain crosses the membrane as a helical span at residues 75-95 (YPLLSLSYVLVAACALMIPEF). Topologically, residues 96–103 (NERFTFSR) are periplasmic. Residues 104–124 (LMGVALICGGLLLICLPAGGK) traverse the membrane as a helical segment. The Cytoplasmic segment spans residues 125–130 (GDTPRR).

It belongs to the ArnF family. Heterodimer of ArnE and ArnF.

It is found in the cell inner membrane. The protein operates within bacterial outer membrane biogenesis; lipopolysaccharide biosynthesis. Its function is as follows. Translocates 4-amino-4-deoxy-L-arabinose-phosphoundecaprenol (alpha-L-Ara4N-phosphoundecaprenol) from the cytoplasmic to the periplasmic side of the inner membrane. The protein is Probable 4-amino-4-deoxy-L-arabinose-phosphoundecaprenol flippase subunit ArnF of Sodalis glossinidius (strain morsitans).